The primary structure comprises 395 residues: Teichoic acid D-alanyltransferase (395 aa).

At 1–6 (MTPYSS) the chain is on the extracellular side. Residues 7-26 (FLFFILLGILLLPTIILGLN) form a helical membrane-spanning segment. Topologically, residues 27–30 (GKRF) are cytoplasmic. A helical membrane pass occupies residues 31-46 (QAYNMFISIIILALIF). Residues 47 to 50 (SHDL) lie on the Extracellular side of the membrane. Residues 51-76 (HGVIALCLFTIWQVLLISGYLAYRQK) form a helical membrane-spanning segment. Residues 77–79 (ANS) lie on the Cytoplasmic side of the membrane. The chain crosses the membrane as a helical span at residues 80–104 (GFVFCGAVIASILPLFLSKIWPFLS). At 105-120 (HPQPHHPPHNLISFLG) the chain is on the extracellular side. A helical membrane pass occupies residues 121 to 137 (ISYLTFKGVQLIMEARD). The Cytoplasmic segment spans residues 138 to 145 (GLLKEQLP). Residues 146–175 (LHRLLYFILFFPTISSGPIDRYRRFVKDEQ) lie within the membrane without spanning it. The Cytoplasmic portion of the chain corresponds to 176–179 (KAWT). Residues 180–223 (KEEYADLLYTGIHKIFIGFLYKFIIGYAINTYFIMNLPAITHNK) form a helical membrane-spanning segment. Position 224 (I224) is a topological domain, extracellular. Residues 225 to 256 (LGNLLYMYGYSMYLFFDFAGYTMFAVGVSYIM) traverse the membrane as a helical segment. At 257–266 (GIKSPENFNK) the chain is on the cytoplasmic side. An intramembrane segment occupies 267 to 303 (PFISKNIKDFWNRWHMSLSFWFRDYVFMRFVFWMTKK). The Cytoplasmic portion of the chain corresponds to 304-308 (KWIKN). A helical transmembrane segment spans residues 309–328 (RMAVSNIGYFLLFMLMGVWH). The active site involves H328. Topologically, residues 329–333 (GLAPQ) are extracellular. Residues 334-351 (YIIYGLYHAVLMTCYNFF) traverse the membrane as a helical segment. Residues 352–364 (EKWNKKYKWLPSN) lie on the Cytoplasmic side of the membrane. The helical transmembrane segment at 365–387 (RWTTILAIVITFHFVCFGFYIFS) threads the bilayer. Residues 388 to 395 (GKPFHHHH) lie on the Extracellular side of the membrane.

It belongs to the membrane-bound acyltransferase family.

The protein resides in the cell membrane. Its pathway is cell wall biogenesis; lipoteichoic acid biosynthesis. In terms of biological role, O-acyltransferase that catalyzes D-alanylation of both teichoic acid and lipoteichoic acid (LTA). D-alanylation of LTA plays an important role in modulating the properties of the cell wall in Gram-positive bacteria, influencing the net charge of the cell wall. Catalyzes D-alanylation from DltC carrier protein. The polypeptide is Teichoic acid D-alanyltransferase (Bacillus subtilis (strain 168)).